The following is a 294-amino-acid chain: Tryptophan 2,3-dioxygenase (294 aa).

The disordered stretch occupies residues 1–20; it reads MSEFKGCPFSGAASEAGTKA. Substrate is bound by residues 63-67, Tyr-125, and Arg-129; that span reads FIVQH. His-252 provides a ligand contact to heme. Position 266 (Thr-266) interacts with substrate.

The protein belongs to the tryptophan 2,3-dioxygenase family. As to quaternary structure, homotetramer. Heme is required as a cofactor.

The catalysed reaction is L-tryptophan + O2 = N-formyl-L-kynurenine. Its pathway is amino-acid degradation; L-tryptophan degradation via kynurenine pathway; L-kynurenine from L-tryptophan: step 1/2. Heme-dependent dioxygenase that catalyzes the oxidative cleavage of the L-tryptophan (L-Trp) pyrrole ring and converts L-tryptophan to N-formyl-L-kynurenine. Catalyzes the oxidative cleavage of the indole moiety. This Cupriavidus necator (strain ATCC 17699 / DSM 428 / KCTC 22496 / NCIMB 10442 / H16 / Stanier 337) (Ralstonia eutropha) protein is Tryptophan 2,3-dioxygenase.